A 78-amino-acid chain; its full sequence is UPF0335 protein RP113 (78 aa).

It belongs to the UPF0335 family.

The sequence is that of UPF0335 protein RP113 from Rickettsia prowazekii (strain Madrid E).